Consider the following 141-residue polypeptide: Hemoglobin subunit alpha (141 aa).

A Globin domain is found at 1-141; it reads VLSGTDKSNI…VSTVLTSKYR (141 aa). At Ser3 the chain carries Phosphoserine. N6-succinyllysine is present on residues Lys7 and Lys11. Lys16 is modified (N6-acetyllysine; alternate). Lys16 is modified (N6-succinyllysine; alternate). A Phosphotyrosine modification is found at Tyr24. Ser35 carries the phosphoserine modification. Lys40 is subject to N6-succinyllysine. Position 49 is a phosphoserine (Ser49). His58 lines the O2 pocket. Position 87 (His87) interacts with heme b. Ser102 is subject to Phosphoserine. Thr108 is modified (phosphothreonine). Phosphoserine is present on Ser124. A phosphothreonine mark is found at Thr134 and Thr137. Ser138 carries the post-translational modification Phosphoserine.

This sequence belongs to the globin family. Heterotetramer of two alpha chains and two beta chains. Red blood cells.

Involved in oxygen transport from the lung to the various peripheral tissues. Its function is as follows. Hemopressin acts as an antagonist peptide of the cannabinoid receptor CNR1. Hemopressin-binding efficiently blocks cannabinoid receptor CNR1 and subsequent signaling. In Talpa europaea (European mole), this protein is Hemoglobin subunit alpha (HBA).